The primary structure comprises 322 residues: Tropinone reductase homolog At2g29260, chloroplastic (322 aa).

The transit peptide at 1 to 61 (MVLDMASHLY…YASQSSIAIT (61 aa)) directs the protein to the chloroplast. 74-98 (LVTGGTRGIGRAIVEELAGLGAEVH) is a binding site for NADP(+). Substrate is bound at residue Ser207.

It belongs to the short-chain dehydrogenases/reductases (SDR) family. SDR65C subfamily.

The protein resides in the plastid. The protein localises to the chloroplast. The chain is Tropinone reductase homolog At2g29260, chloroplastic from Arabidopsis thaliana (Mouse-ear cress).